A 346-amino-acid chain; its full sequence is KH domain-containing, RNA-binding, signal transduction-associated protein 3 (346 aa).

The involved in homodimerization stretch occupies residues 1–160 (MEEKYLPELM…IKKFLIPDYN (160 aa)). A Glycyl lysine isopeptide (Lys-Gly) (interchain with G-Cter in SUMO2) cross-link involves residue K4. The 67-residue stretch at 61–127 (LIPVKQFPKF…AKYFHLNDDL (67 aa)) folds into the KH domain. The segment at 212 to 251 (RPVGVVVPRGTPTPRGVLSTRGPVSRGRGLLTPRARGVPP) is interaction with SIAH1. A compositionally biased stretch (low complexity) spans 213-228 (PVGVVVPRGTPTPRGV). 2 disordered regions span residues 213-267 (PVGV…ETYG) and 318-346 (QEEW…YGRY). Residues 253 to 262 (GYRPPPPPPT) show a composition bias toward pro residues.

Belongs to the KHDRBS family. In terms of assembly, self-associates to form homooligomers; dimerization increases RNA affinity. Interacts with KHDRBS2/SLM-1. Interacts with KHDRBS1/SAM68; heterooligomer formation of KHDRBS family proteins may modulate RNA substrate specificity. Interacts with the splicing regulatory proteins SFRS9, SAFB and YTHDC1. Interacts with HNRPL. Interacts with RBMX, RBMY1A1, p85 subunit of PI3-kinase, SERPINB5. Interacts with SIAH1 which promotes targeting for degradation. Post-translationally, phosphorylated on tyrosine residues. Isoform 1 C-terminal region is tyrosine-rich, but isoform 2 lacking this C-terminal region is also tyrosine-phosphorylated. As to expression, ubiquitous with higher expression in testis, skeletal muscle and brain. Expressed in the kidney only in podocytes, the glomerular epithelial cells of the kidney. Strongly expressed after meiosis.

Its subcellular location is the nucleus. Functionally, RNA-binding protein that plays a role in the regulation of alternative splicing and influences mRNA splice site selection and exon inclusion. Binds preferentially to the 5'-[AU]UAAA-3' motif in vitro. Binds optimally to RNA containing 5'-[AU]UAA-3' as a bipartite motif spaced by more than 15 nucleotides. Binds poly(A). RNA-binding abilities are down-regulated by tyrosine kinase PTK6. Involved in splice site selection of vascular endothelial growth factor. In vitro regulates CD44 alternative splicing by direct binding to purine-rich exonic enhancer. Can regulate alternative splicing of neurexins NRXN1-3 in the laminin G-like domain 6 containing the evolutionary conserved neurexin alternative spliced segment 4 (AS4) involved in neurexin selective targeting to postsynaptic partners such as neuroligins and LRRTM family members. Targeted, cell-type specific splicing regulation of NRXN1 at AS4 is involved in neuronal glutamatergic synapse function and plasticity. May regulate expression of KHDRBS2/SLIM-1 in defined brain neuron populations by modifying its alternative splicing. Can bind FABP9 mRNA. May play a role as a negative regulator of cell growth. Inhibits cell proliferation. (Microbial infection) Involved in post-transcriptional regulation of HIV-1 gene expression. This Homo sapiens (Human) protein is KH domain-containing, RNA-binding, signal transduction-associated protein 3 (KHDRBS3).